A 622-amino-acid chain; its full sequence is Probable ATP-dependent RNA helicase DDX41 (622 aa).

A compositionally biased stretch (basic and acidic residues) spans 1-15 (MEESEPERKRARTDE). 2 disordered regions span residues 1–39 (MEESEPERKRARTDEVPAGGSRSEAEDEDDEDYVPYVPL) and 52–84 (QRRRKGAAEEEQQDSGSEPRGDEDDIPLGPQSN). S4 bears the Phosphoserine mark. K9 carries the post-translational modification N6-acetyllysine. Residue K9 forms a Glycyl lysine isopeptide (Lys-Gly) (interchain with G-Cter in ubiquitin) linkage. Phosphoserine occurs at positions 21 and 23. Y33 is subject to Phosphotyrosine. K115 participates in a covalent cross-link: Glycyl lysine isopeptide (Lys-Gly) (interchain with G-Cter in ubiquitin). Residues 181–209 (KSFKEMKFPAAILRGLKKKGIHHPTPIQI) carry the Q motif motif. Residues 212–396 (IPTILSGRDM…KSALVKPVTI (185 aa)) enclose the Helicase ATP-binding domain. Position 225-232 (225-232 (AFTGSGKT)) interacts with ATP. The short motif at 344-347 (DEAD) is the DEAD box element. Residues 407 to 567 (DVIQEVEYVK…KVPPVLQVLH (161 aa)) enclose the Helicase C-terminal domain. Position 414 is a phosphotyrosine; by BTK (Y414). Residues K416 and K442 each participate in a glycyl lysine isopeptide (Lys-Gly) (interchain with G-Cter in SUMO2) cross-link. A CCHC-type zinc finger spans residues 580 to 597 (RGCAFCGGLGHRITDCPK).

Belongs to the DEAD box helicase family. DDX41 subfamily. In terms of assembly, identified in the spliceosome C complex. Interacts with ERCC6. Interacts with FAM50A. Interacts with STING1. Interacts with CGAS. Interacts with several spliceosomes components such as PRP19 or CDC5L. Post-translationally, acetylation at Lys-9 regulates the nuclear/cytoplasmic localization. In terms of processing, phosphorylated by BTK; phosphorylation induces binding to dsDNA and STING1. 'Lys-48'-linked ubiquitinated and degraded by TRIM21 leading to negative regulation of the innate immune response to intracellular dsDNA.

It localises to the nucleus. It is found in the cytoplasm. It catalyses the reaction ATP + H2O = ADP + phosphate + H(+). Functionally, multifunctional protein that participates in many aspects of cellular RNA metabolism. Plays pivotal roles in innate immune sensing and hematopoietic homeostasis. Recognizes foreign or self-nucleic acids generated during microbial infection, thereby initiating anti-pathogen responses. Mechanistically, phosphorylation by BTK allows binding to dsDNA leading to interaction with STING1. Modulates the homeostasis of dsDNA through its ATP-dependent DNA-unwinding activity and ATP-independent strand-annealing activity. In turn, induces STING1-mediated type I interferon and cytokine responses to DNA and DNA viruses. Selectively modulates the transcription of certain immunity-associated genes by regulating their alternative splicing. Binds to RNA (R)-loops, structures consisting of DNA/RNA hybrids and a displaced strand of DNA that occur during transcription, and prevents their accumulation, thereby maintaining genome stability. Also participates in pre-mRNA splicing, translational regulation and snoRNA processing, which is essential for ribosome biogenesis. This is Probable ATP-dependent RNA helicase DDX41 (DDX41) from Homo sapiens (Human).